A 41-amino-acid chain; its full sequence is Disintegrin viperistatin (41 aa).

Intrachain disulfides connect Cys-1–Cys-10, Cys-6–Cys-29, Cys-7–Cys-34, and Cys-19–Cys-36. Residues 1-41 form the Disintegrin domain; it reads CTTGPCCRQCKLKPAGTTCWKTSRTSHYCTGKSCDCPVYQG. The Cell attachment site; atypical (KTS) motif lies at 21-23; the sequence is KTS.

As to quaternary structure, monomer. As to expression, expressed by the venom gland.

The protein localises to the secreted. Functionally, potent and highly selective inhibitor of alpha-1/beta-1 (ITGA1/ITGB1) integrin binding to collagen I and IV. Is about 25-fold more potent than obtustatin inhibiting the binding of this integrin to collagen IV. This is Disintegrin viperistatin from Daboia palaestinae (Palestine viper).